The primary structure comprises 274 residues: Rhamnulose-1-phosphate aldolase (274 aa).

Glutamate 117 is a catalytic residue. Zn(2+) contacts are provided by histidine 141, histidine 143, and histidine 212.

Belongs to the aldolase class II family. RhaD subfamily. In terms of assembly, homotetramer. Zn(2+) is required as a cofactor.

Its subcellular location is the cytoplasm. The enzyme catalyses L-rhamnulose 1-phosphate = (S)-lactaldehyde + dihydroxyacetone phosphate. It participates in carbohydrate degradation; L-rhamnose degradation; glycerone phosphate from L-rhamnose: step 3/3. In terms of biological role, catalyzes the reversible cleavage of L-rhamnulose-1-phosphate to dihydroxyacetone phosphate (DHAP) and L-lactaldehyde. The polypeptide is Rhamnulose-1-phosphate aldolase (Yersinia pseudotuberculosis serotype I (strain IP32953)).